The primary structure comprises 849 residues: Serrate RNA effector molecule homolog A (849 aa).

Disordered stretches follow at residues 1–90 (MADS…HGSD) and 276–409 (KREA…PRPL). Basic and acidic residues-rich tracts occupy residues 8 to 73 (YDRR…RHDL), 276 to 306 (KREAAKKEEAPVTETEKVVTEEKEAPAKPEN), and 314 to 342 (EKPVKPQEEEEKKVEKKVEKEEPERETRK). Positions 354 to 364 (SDDGSDSESDT) are enriched in acidic residues. Over residues 381–405 (RAEETPKKEEDTEKQKEKQKEDTVK) the composition is skewed to basic and acidic residues.

Belongs to the ARS2 family. Interacts ncbp1/cbp80.

The protein localises to the nucleus. It is found in the nucleoplasm. It localises to the cytoplasm. Acts as a mediator between the cap-binding complex (CBC) and the primary microRNAs (miRNAs) processing machinery during cell proliferation. Contributes to the stability and delivery of capped primary miRNA transcripts to the primary miRNA processing complex, thereby playing a role in RNA-mediated gene silencing (RNAi) by miRNAs. This chain is Serrate RNA effector molecule homolog A (srrt-a), found in Xenopus laevis (African clawed frog).